Here is a 234-residue protein sequence, read N- to C-terminus: LexA repressor (234 aa).

The segment at residues 26–46 (FDEMKTALELTSKSGIHRLIT) is a DNA-binding region (H-T-H motif). Residues S155 and K193 each act as for autocatalytic cleavage activity in the active site.

This sequence belongs to the peptidase S24 family. In terms of assembly, homodimer.

It carries out the reaction Hydrolysis of Ala-|-Gly bond in repressor LexA.. Represses a number of genes involved in the response to DNA damage (SOS response), including recA and lexA. In the presence of single-stranded DNA, RecA interacts with LexA causing an autocatalytic cleavage which disrupts the DNA-binding part of LexA, leading to derepression of the SOS regulon and eventually DNA repair. This Bartonella henselae (strain ATCC 49882 / DSM 28221 / CCUG 30454 / Houston 1) (Rochalimaea henselae) protein is LexA repressor.